The sequence spans 101 residues: UPF0235 protein SG2030 (101 aa).

This sequence belongs to the UPF0235 family.

In Sodalis glossinidius (strain morsitans), this protein is UPF0235 protein SG2030.